Here is a 208-residue protein sequence, read N- to C-terminus: Ras-related protein M-Ras (208 aa).

GTP-binding residues include Asp21, Gly22, Gly23, Val24, Gly25, Lys26, Ser27, Ala28, Phe38, Val39, Pro40, Tyr42, Pro44, and Thr45. Ser27 is a Mg(2+) binding site. The Effector region motif lies at 42–50 (YDPTIEDSY). Positions 45 and 67 each coordinate Mg(2+). Positions 70, 126, 127, 129, 156, 157, and 158 each coordinate GTP. A Cysteine methyl ester modification is found at Cys205. Residue Cys205 is the site of S-geranylgeranyl cysteine attachment. A propeptide spans 206–208 (VIL) (removed in mature form).

This sequence belongs to the small GTPase superfamily. Ras family. As to quaternary structure, component of the SHOC2-MRAS-PP1c (SMP) holophosphatase complex consisting of SHOC2, GTP-bound M-Ras/MRAS and the catalytic subunit of protein phosphatase 1 (either PPP1CA, PPP1CB or PPP1CC). Interacts (active GTP-bound form) with both SHOC2 and PP1c (all isoforms) to form a tertiary complex; SHOC2 and PP1c preferably bind M-Ras/MRAS, but they also bind K-Ras/KRAS, N-Ras/NRAS and H-Ras/HRAS. Interacts with RGL3. Interacts (active GTP-bound form preferentially) with RGS14. Mg(2+) is required as a cofactor. Expressed in skeletal muscle cells.

It localises to the cell membrane. The enzyme catalyses GTP + H2O = GDP + phosphate + H(+). Signal transducer in the Ras-MAPK signaling pathway that regulates cell proliferation and survival. Core component of the SHOC2-MRAS-PP1c (SMP) holophosphatase complex that regulates the MAPK pathway activation. The formation of the SMP complex only occurs when MRAS is GTP-bound. MRAS has low intrinsic GTPase activity and may require additional factors for activation. The SMP complex specifically dephosphorylates the inhibitory phosphorylation at 'Ser-259' of RAF1 kinase, 'Ser-365' of BRAF kinase and 'Ser-214' of ARAF kinase, stimulating their kinase activities. The sequence is that of Ras-related protein M-Ras (Mras) from Rattus norvegicus (Rat).